A 235-amino-acid chain; its full sequence is Large ribosomal subunit protein uL1 (235 aa).

This sequence belongs to the universal ribosomal protein uL1 family. Part of the 50S ribosomal subunit.

Binds directly to 23S rRNA. The L1 stalk is quite mobile in the ribosome, and is involved in E site tRNA release. Functionally, protein L1 is also a translational repressor protein, it controls the translation of the L11 operon by binding to its mRNA. The sequence is that of Large ribosomal subunit protein uL1 from Micrococcus luteus (strain ATCC 4698 / DSM 20030 / JCM 1464 / CCM 169 / CCUG 5858 / IAM 1056 / NBRC 3333 / NCIMB 9278 / NCTC 2665 / VKM Ac-2230) (Micrococcus lysodeikticus).